Consider the following 95-residue polypeptide: Protein TRACHEARY ELEMENT DIFFERENTIATION-RELATED 6 (95 aa).

At 1-3 the chain is on the extracellular side; it reads MAT. The chain crosses the membrane as a helical span at residues 4-24; the sequence is IFIVFVSFGCVFVLGIAAFVL. The Cytoplasmic portion of the chain corresponds to 25–95; it reads CCLIKKWKCS…KLGTASTSKA (71 aa).

As to quaternary structure, interacts with the secondary cell wall (SCW)-related cellulose synthase complex. As to expression, accumulates in cells differentiating into tracheary element (TE) which undergo secondary cell wall (SCW) formation.

The protein localises to the cell membrane. It localises to the secreted. It is found in the cell wall. Its function is as follows. Involved in the secondary cell wall (SCW) formation of vessel elements (e.g. protoxylem and metaxylem), thus promoting tracheary element (TE) differentiation. The protein is Protein TRACHEARY ELEMENT DIFFERENTIATION-RELATED 6 of Zinnia elegans (Garden zinnia).